We begin with the raw amino-acid sequence, 520 residues long: Cell adhesion molecule CEACAM2 (520 aa).

The N-terminal stretch at 1–34 (MELASAHLHKGQVPWFGLLLTASLLASWSPPTTA) is a signal peptide. The Ig-like V-type domain occupies 35-141 (QVTVMAFPLH…RVLTGQFHVH (107 aa)). The Extracellular portion of the chain corresponds to 35-422 (QVTVMAFPLH…IFDSTYDISD (388 aa)). 16 N-linked (GlcNAc...) asparagine glycosylation sites follow: Asn87, Asn104, Asn148, Asn152, Asn175, Asn199, Asn206, Asn210, Asn226, Asn258, Asn290, Asn294, Asn304, Asn317, Asn333, and Asn361. 3 Ig-like C2-type domains span residues 145-234 (LKSN…FSLN), 239-319 (PDTP…KNIT), and 327-411 (PSLQ…IKLE). Residues Cys167 and Cys217 are joined by a disulfide bond. An intrachain disulfide couples Cys261 to Cys301. A disulfide bridge links Cys346 with Cys394. A helical membrane pass occupies residues 423-443 (VPIAVIITGAVAGVILIAGLA). The Cytoplasmic portion of the chain corresponds to 444–520 (YRLCSRKSRW…ETVYSEVKKK (77 aa)). The disordered stretch occupies residues 457 to 520 (QRDLTEHKPS…ETVYSEVKKK (64 aa)). Residues 466–480 (SASNHNLAPSDNSPN) show a composition bias toward polar residues. Position 487 is a phosphotyrosine (Tyr487). The segment covering 490 to 513 (LNFNSQQPNRPTSAPSSPRATETV) has biased composition (polar residues). Ser502 carries the phosphoserine modification. At Tyr514 the chain carries Phosphotyrosine.

Belongs to the immunoglobulin superfamily. CEA family. As to quaternary structure, interacts weakly with MHV spike protein in tissue culture. In terms of tissue distribution, isoform 2 is detected in elongating spermatids within the seminiferous epithelium (at protein level). Expressed in kidney, colon, uterus, gut mononuclear cells, crypt epithelia of intestinal tissues, and to a lesser extent, in spleen. Expressed in brain including VMH, globus pallidus, ventral pallidum, striatum, olfactory bulb and hippocampus. Also detected in rectal carcinoma cell line CMT93. Isoform 2 and isoform 3 are expressed in testis. Isoform 2 is detected in seminiferous tubule, not detected in epididymal spermatozoa. Also not observed on spermatogonia, spermatocytes, round spermatids or somatic Sertoli cells. During stages I-VII of spermatogenesis, detected on the elongating spermatids. At spermiation (stage VIII) and subsequent stages IX-XII, levels are drastically reduced or absent in the seminiferous tubules. Sometimes weakly detected in the apical region of stage-VIII seminiferous epithelium. Isoform 2 level is very low in stomach, kidney, intestine, liver and spleen.

The protein resides in the cell membrane. In terms of biological role, controls energy balance and peripheral insulin action. Involved in the regulation of feeding behavior particularly in the ventromedial nucleus of hypothalamus (VMH) regulation of food intake. Has a role in the regulation of metabolic rate and insulin sensitivity or resistance via effects on brown adipogenesis, sympathetic nervous outflow to brown adipose tissue, spontaneous activity and energy expenditure in skeletal muscle. In case of murine coronavirus (MHV) infection, does probably not serve as functional receptor for the virus. Functionally, isoform 2 may be an adhesion molecule contributing to cell to cell adhesion between elongating spermatids and Sertoli cells within the seminiferous epithelium. The chain is Cell adhesion molecule CEACAM2 from Mus musculus (Mouse).